The chain runs to 26 residues: Melittin (26 aa).

Residue G1 is modified to N-formylglycine; partial. A Glutamine amide modification is found at Q26.

Belongs to the melittin family. As to quaternary structure, monomer (in solution and for integration into membranes), homotetramer (in solution and potentially as a toroidal pore in membranes), and potenially homomultimer (as a toroidal pore in membranes). In terms of tissue distribution, expressed by the venom gland.

The protein localises to the secreted. It is found in the target cell membrane. Functionally, main toxin of bee venom with strong hemolytic activity and antimicrobial activity. It has enhancing effects on bee venom phospholipase A2 activity. This amphipathic toxin binds to negatively charged membrane surface and forms pore by inserting into lipid bilayers inducing the leakage of ions and molecules and the enhancement of permeability that ultimately leads to cell lysis. It acts as a voltage-gated pore with higher selectivity for anions over cations. The ion conductance has been shown to be voltage-dependent. Self-association of melittin in membranes is promoted by high ionic strength, but not by the presence of negatively charged lipids. In vivo, intradermal injection into healthy human volunteers produce sharp pain sensation and an inflammatory response. It produces pain by activating primary nociceptor cells directly and indirectly due to its ability to activate plasma membrane phospholipase A2 and its pore-forming activity. This Apis florea (Dwarf honeybee) protein is Melittin (MELT).